Here is a 365-residue protein sequence, read N- to C-terminus: Fructose-1,6-bisphosphate aldolase/phosphatase (365 aa).

D11 serves as the catalytic Proton acceptor; for FBP phosphatase activity. The Mg(2+) site is built by D11, H18, D52, and D53. A beta-D-fructose 1,6-bisphosphate-binding site is contributed by H18. H18 contacts dihydroxyacetone phosphate. Y90 is a beta-D-fructose 1,6-bisphosphate binding site. Q94 contacts Mg(2+). Beta-D-fructose 1,6-bisphosphate is bound at residue 103 to 104 (GN). Position 131 (D131) interacts with Mg(2+). K132 provides a ligand contact to beta-D-fructose 1,6-bisphosphate. Position 132 (K132) interacts with dihydroxyacetone phosphate. Catalysis depends on Y228, which acts as the Proton donor/acceptor; for FBP aldolase activity. Residues K231, D232, and D233 each coordinate Mg(2+). K231 serves as the catalytic Schiff-base intermediate with DHAP; for FBP aldolase activity. Beta-D-fructose 1,6-bisphosphate contacts are provided by residues 241–242 (QS), R265, D286, and Y347. R265 and D286 together coordinate dihydroxyacetone phosphate.

This sequence belongs to the FBP aldolase/phosphatase family. In terms of assembly, homooctamer; dimer of tetramers. The cofactor is Mg(2+).

It catalyses the reaction beta-D-fructose 1,6-bisphosphate + H2O = beta-D-fructose 6-phosphate + phosphate. It carries out the reaction beta-D-fructose 1,6-bisphosphate = D-glyceraldehyde 3-phosphate + dihydroxyacetone phosphate. It participates in carbohydrate biosynthesis; gluconeogenesis. Its function is as follows. Catalyzes two subsequent steps in gluconeogenesis: the aldol condensation of dihydroxyacetone phosphate (DHAP) and glyceraldehyde-3-phosphate (GA3P) to fructose-1,6-bisphosphate (FBP), and the dephosphorylation of FBP to fructose-6-phosphate (F6P). This chain is Fructose-1,6-bisphosphate aldolase/phosphatase, found in Methanothermobacter marburgensis (strain ATCC BAA-927 / DSM 2133 / JCM 14651 / NBRC 100331 / OCM 82 / Marburg) (Methanobacterium thermoautotrophicum).